The sequence spans 385 residues: Selenoprotein P (385 aa).

Residues 1-19 form the signal peptide; it reads MWRSLGLALALCLLPYGGA. Residue U59 is a non-standard amino acid, selenocysteine. A cross-link (cysteinyl-selenocysteine (Sec-Cys); in isoform Se-P1) is located at residues 59-62; it reads UYLC. N-linked (GlcNAc...) asparagine glycans are attached at residues N83, N174, and N188. 2 cysteine pairs are disulfide-bonded: C168–C186 and C172–C175. Residues 196–262 form a disordered region; the sequence is KTTEPSEEHN…KGQHRQGHLE (67 aa). Basic residues predominate over residues 243 to 258; it reads LHHHHHHHKHKGQHRQ. Residue U264 is a non-standard amino acid, selenocysteine. The residue at position 269 (S269) is a Phosphoserine. 4 non-standard amino acids (selenocysteine) are found at residues U282, U323, U335, and U357. The segment at 357–385 is disordered; it reads UHSQHVSPTEASPNUSUNNKTKKUKUNLN. A compositionally biased stretch (polar residues) spans 360–369; that stretch reads QHVSPTEASP. A glycan (O-linked (Hex...) threonine; partial) is linked at T365. Residues U371, U373, U380, and U382 are each a non-standard amino acid (selenocysteine). Basic residues predominate over residues 376-385; the sequence is KTKKUKUNLN.

The protein belongs to the selenoprotein P family. Isoform Se-P1 contains several disulfide bridges and a selenide-sulfide bond between Sec-59 and Cys-62. These bonds are speculated to serve as redox-active pairs. Post-translationally, phosphorylation sites are present in the extracellular medium. Widely expressed, mainly by the liver. Secreted in plasma.

Its subcellular location is the secreted. In terms of biological role, might be responsible for some of the extracellular antioxidant defense properties of selenium or might be involved in the transport of selenium. May supply selenium to tissues such as brain and testis. The protein is Selenoprotein P of Rattus norvegicus (Rat).